Consider the following 342-residue polypeptide: Nucleoid-associated protein Spea_1765 (342 aa).

It belongs to the YejK family.

It is found in the cytoplasm. It localises to the nucleoid. This chain is Nucleoid-associated protein Spea_1765, found in Shewanella pealeana (strain ATCC 700345 / ANG-SQ1).